Here is a 297-residue protein sequence, read N- to C-terminus: Formamidopyrimidine-DNA glycosylase (297 aa).

The Schiff-base intermediate with DNA role is filled by Pro2. The active-site Proton donor is the Glu3. The active-site Proton donor; for beta-elimination activity is the Lys58. 3 residues coordinate DNA: His106, Arg125, and Arg168. Residues 259–295 (RVYDREGLACTARGCRGRVRRIVQAGRSTFYCETCQP) form an FPG-type zinc finger. Arg285 functions as the Proton donor; for delta-elimination activity in the catalytic mechanism.

It belongs to the FPG family. In terms of assembly, monomer. Requires Zn(2+) as cofactor.

The enzyme catalyses Hydrolysis of DNA containing ring-opened 7-methylguanine residues, releasing 2,6-diamino-4-hydroxy-5-(N-methyl)formamidopyrimidine.. It carries out the reaction 2'-deoxyribonucleotide-(2'-deoxyribose 5'-phosphate)-2'-deoxyribonucleotide-DNA = a 3'-end 2'-deoxyribonucleotide-(2,3-dehydro-2,3-deoxyribose 5'-phosphate)-DNA + a 5'-end 5'-phospho-2'-deoxyribonucleoside-DNA + H(+). Functionally, involved in base excision repair of DNA damaged by oxidation or by mutagenic agents. Acts as a DNA glycosylase that recognizes and removes damaged bases. Has a preference for oxidized purines, such as 7,8-dihydro-8-oxoguanine (8-oxoG). Has AP (apurinic/apyrimidinic) lyase activity and introduces nicks in the DNA strand. Cleaves the DNA backbone by beta-delta elimination to generate a single-strand break at the site of the removed base with both 3'- and 5'-phosphates. In Methylobacterium sp. (strain 4-46), this protein is Formamidopyrimidine-DNA glycosylase.